Reading from the N-terminus, the 228-residue chain is Methylthioribulose-1-phosphate dehydratase (228 aa).

Residue cysteine 92 participates in substrate binding. Positions 110 and 112 each coordinate Zn(2+). Catalysis depends on glutamate 135, which acts as the Proton donor/acceptor. Residue histidine 192 coordinates Zn(2+).

Belongs to the aldolase class II family. MtnB subfamily. The cofactor is Zn(2+).

Its subcellular location is the cytoplasm. It localises to the nucleus. The enzyme catalyses 5-(methylsulfanyl)-D-ribulose 1-phosphate = 5-methylsulfanyl-2,3-dioxopentyl phosphate + H2O. It participates in amino-acid biosynthesis; L-methionine biosynthesis via salvage pathway; L-methionine from S-methyl-5-thio-alpha-D-ribose 1-phosphate: step 2/6. In terms of biological role, catalyzes the dehydration of methylthioribulose-1-phosphate (MTRu-1-P) into 2,3-diketo-5-methylthiopentyl-1-phosphate (DK-MTP-1-P). The polypeptide is Methylthioribulose-1-phosphate dehydratase (Schizosaccharomyces pombe (strain 972 / ATCC 24843) (Fission yeast)).